We begin with the raw amino-acid sequence, 526 residues long: Na(+)/H(+) antiporter NhaB (526 aa).

11 consecutive transmembrane segments (helical) span residues 14-34 (FLGY…LVNP), 63-83 (CYPL…GMTS), 99-119 (MLLV…LFVF), 122-142 (LLLR…AAAF), 146-166 (FLDA…FYGI), 206-226 (LLMH…VGEP), 239-259 (FVSF…CGIL), 307-327 (AVIG…VGLI), 357-377 (FTAL…QQLF), 451-471 (ATPN…APLI), and 479-499 (VIMA…CVEF).

Belongs to the NhaB Na(+)/H(+) (TC 2.A.34) antiporter family.

Its subcellular location is the cell inner membrane. The enzyme catalyses 2 Na(+)(in) + 3 H(+)(out) = 2 Na(+)(out) + 3 H(+)(in). Na(+)/H(+) antiporter that extrudes sodium in exchange for external protons. The sequence is that of Na(+)/H(+) antiporter NhaB from Pectobacterium carotovorum subsp. carotovorum (strain PC1).